Reading from the N-terminus, the 229-residue chain is Cytosolic-abundant heat soluble protein 107838 (229 aa).

Positions 1–29 (MSAEAMNMNMNQDAVFIPPPEGEQYERKE) are disordered. A coiled-coil region spans residues 109–145 (LSANYQKEVERKTEAYRKQQEVEADKIRKELEKQHLR). CAHS motif regions lie at residues 124-142 (YRKQ…LEKQ) and 161-179 (QKKM…MDRE). Over residues 202 to 218 (SSAAGTETGGQVVSESQ) the composition is skewed to polar residues. Residues 202 to 229 (SSAAGTETGGQVVSESQKFTERNRQIKQ) form a disordered region. Over residues 219-229 (KFTERNRQIKQ) the composition is skewed to basic and acidic residues.

It belongs to the Cytosolic-abundant heat soluble protein (CAHS) family.

It localises to the cytoplasm. Functionally, CAHS proteins are cytosolic heat soluble proteins that seem to contribute to the anhydrobiosis in tardigrades, but their specific mechanisms are yet to be identified. It is possible that protection during anhydrobiosis might occur via the stabilization of vitrifying small molecules such as sugars, but not via the direct glass transition of CAHS proteins themselves. This chain is Cytosolic-abundant heat soluble protein 107838, found in Paramacrobiotus richtersi (Water bear).